A 461-amino-acid chain; its full sequence is Probable tubulin polyglutamylase TTLL9 (461 aa).

Residues 1–21 (MSRPKNQNYKGHGLQKGKERE) are disordered. The region spanning 22-402 (QRASIRFKTT…EARLTGREKR (381 aa)) is the TTL domain. ATP is bound by residues Lys-149 and 155–156 (QG). Gln-155 contacts a protein. The disordered stretch occupies residues 182–208 (SLEAQPARNTVNPSGSHDTRSSDDQKD). Over residues 188–197 (ARNTVNPSGS) the composition is skewed to polar residues. Basic and acidic residues predominate over residues 198–208 (HDTRSSDDQKD). Residues 218–221 (QRYI) and 231–233 (KFD) each bind ATP. Residue Arg-257 coordinates L-glutamate. Position 276–277 (276–277 (TN)) interacts with ATP. Lys-294 contributes to the L-glutamate binding site. 3 residues coordinate Mg(2+): Asp-348, Glu-361, and Asn-363. Lys-379 is a binding site for L-glutamate.

It belongs to the tubulin--tyrosine ligase family. The cofactor is Mg(2+).

Its subcellular location is the cytoplasm. The protein localises to the cytoskeleton. It localises to the cilium basal body. The protein resides in the flagellum axoneme. The enzyme catalyses (L-glutamyl)(n)-gamma-L-glutamyl-L-glutamyl-[protein] + L-glutamate + ATP = (L-glutamyl)(n+1)-gamma-L-glutamyl-L-glutamyl-[protein] + ADP + phosphate + H(+). In terms of biological role, probable tubulin polyglutamylase that generates side chains of glutamate on the gamma-carboxyl group of specific glutamate residues within the C-terminal tail of target proteins. Similar to TTLL1, may acquire enzymatic activity only in complex with other proteins as it is most likely lacking domains important for autonomous activity. Mediates tubulin polyglutamylation which induces establishment of microtubule heterogeneity in sperm flagella, thereby playing a role in normal motile flagella axoneme structure and sperm flagella beating pattern. This Bos taurus (Bovine) protein is Probable tubulin polyglutamylase TTLL9 (TTLL9).